The following is an 82-amino-acid chain: Small ribosomal subunit protein bS16 (82 aa).

It belongs to the bacterial ribosomal protein bS16 family.

The chain is Small ribosomal subunit protein bS16 from Aeromonas hydrophila subsp. hydrophila (strain ATCC 7966 / DSM 30187 / BCRC 13018 / CCUG 14551 / JCM 1027 / KCTC 2358 / NCIMB 9240 / NCTC 8049).